Consider the following 318-residue polypeptide: L-malyl-CoA/beta-methylmalyl-CoA lyase (318 aa).

Positions 19, 24, 30, and 76 each coordinate substrate. Residues glutamate 141 and aspartate 168 each contribute to the Mg(2+) site. Substrate contacts are provided by residues 167 to 168 (AD) and 251 to 252 (IH).

The protein belongs to the HpcH/HpaI aldolase family. In terms of assembly, homohexamer. Dimer of trimers. The cofactor is Mg(2+). It depends on Mn(2+) as a cofactor.

It catalyses the reaction (S)-malyl-CoA = glyoxylate + acetyl-CoA. The catalysed reaction is (2R,3S)-beta-methylmalyl-CoA = propanoyl-CoA + glyoxylate. Its function is as follows. Involved in the ethylmalonyl-CoA pathway for acetate assimilation. Catalyzes the reversible condensation of glyoxylate and acetyl-CoA to L-malyl-CoA and the reversible condensation of glyoxylate and propionyl-CoA to yield beta-methylmalyl-CoA. This is L-malyl-CoA/beta-methylmalyl-CoA lyase from Cereibacter sphaeroides (strain ATCC 17029 / ATH 2.4.9) (Rhodobacter sphaeroides).